A 547-amino-acid chain; its full sequence is Heme-binding protein A (547 aa).

Positions 1 to 18 are cleaved as a signal peptide; it reads MKLKATLTLAAATLVLAA. Residue cysteine 19 is the site of N-palmitoyl cysteine attachment. Cysteine 19 is lipidated: S-diacylglycerol cysteine.

The protein belongs to the bacterial solute-binding protein 5 family.

It is found in the cell inner membrane. Its function is as follows. Important role in heme acquisition or metabolism. The chain is Heme-binding protein A (hbpA) from Haemophilus influenzae (strain ATCC 51907 / DSM 11121 / KW20 / Rd).